Consider the following 175-residue polypeptide: Protein LAZY 3 (175 aa).

A disordered region spans residues 9–39 (RKLSGKKRVPTSDSSQEPSSPPLSKEVQGLP). The IGT motif signature appears at 44-50 (TFLAIGT).

The protein belongs to the LAZY family. In terms of tissue distribution, specifically expressed in roots. Expressed in root tips of young seedlings.

Its function is as follows. Involved in the regulation of root gravitropism. Functions redundantly with LAZY2 and LAZY4 in the control of root gravitropism. Functions redundantly with LAZY1, LAZY2 and LAZY4 to control plant architecture by coupling gravity sensing to the formation of auxin gradients. This is Protein LAZY 3 from Arabidopsis thaliana (Mouse-ear cress).